The primary structure comprises 400 residues: MIPLLSLFYIVAVKVFKKTAPNGKITVYLGKRDFGDHGSYCEPVEGVLLVDNEYLKGRKVFGQVTTTFRYGREEDEVMGLHFSRQLYLALEQVLPTKKNEAPSDFQNRLVRKLGTLAHPFTFALPENAPPSVTLQPGSEDQGRPLGVEYELKLFIAETEDEKPHKRNSVSMAIRKLQYAKPSPLAKQPSALVSKGFMMSSGKLQLEVTLDKELYFHGDKVSANVTISNYSKKTVKNIKVAVVQNTEVTMVNGHFHKTISSIESKEGCPITPGATLSKVYTLLPLASQNKDKRGIALDGMLKEGDTNLASSTLNSTGDAIGIVISYVIRVRLYMGAIGGELVADVSFKLANPEPVPVVPGSQESKAQQEKARMKKQLSREMSTDLIVEDFARRRQFSEDNE.

This sequence belongs to the arrestin family. Phosphorylated.

Functionally, plays an important role in the photoreceptor transduction. In Limulus polyphemus (Atlantic horseshoe crab), this protein is Arrestin, lateral eye.